The chain runs to 265 residues: Glutamate racemase (265 aa).

Substrate-binding positions include 12–13 and 44–45; these read DS and YG. Residue cysteine 75 is the Proton donor/acceptor of the active site. 76 to 77 contacts substrate; that stretch reads NT. Cysteine 186 serves as the catalytic Proton donor/acceptor. 187 to 188 contributes to the substrate binding site; the sequence is TH.

The protein belongs to the aspartate/glutamate racemases family.

The catalysed reaction is L-glutamate = D-glutamate. It functions in the pathway cell wall biogenesis; peptidoglycan biosynthesis. Provides the (R)-glutamate required for cell wall biosynthesis. This chain is Glutamate racemase, found in Pseudomonas putida (strain W619).